A 1646-amino-acid chain; its full sequence is Protein TOPAZ1 (1646 aa).

Residues 1-11 are compositionally biased toward pro residues; sequence MRPPTTPPVPT. Disordered stretches follow at residues 1–90, 407–439, and 850–877; these read MRPP…TDLV, FKSM…DTEE, and QEPR…PGDL. Residues 63–74 show a composition bias toward basic and acidic residues; the sequence is GREETEAKENGK. A compositionally biased stretch (polar residues) spans 409–420; the sequence is SMTSSTVKSPSD. Basic and acidic residues-rich tracts occupy residues 429–439 and 853–863; these read PRGDLKTDTEE and RVSEEHPSADF.

The protein resides in the cytoplasm. The protein localises to the cytosol. In terms of biological role, important for normal spermatogenesis and male fertility. Specifically required for progression to the post-meiotic stages of spermatocyte development. Seems to be necessary for normal expression levels of a number of testis-expressed gene transcripts, although its role in this process is unclear. This chain is Protein TOPAZ1 (Topaz1), found in Rattus norvegicus (Rat).